The sequence spans 212 residues: ATP-dependent Clp protease proteolytic subunit (212 aa).

The active-site Nucleophile is serine 106. The active site involves histidine 131.

It belongs to the peptidase S14 family. Fourteen ClpP subunits assemble into 2 heptameric rings which stack back to back to give a disk-like structure with a central cavity, resembling the structure of eukaryotic proteasomes.

It localises to the cytoplasm. The enzyme catalyses Hydrolysis of proteins to small peptides in the presence of ATP and magnesium. alpha-casein is the usual test substrate. In the absence of ATP, only oligopeptides shorter than five residues are hydrolyzed (such as succinyl-Leu-Tyr-|-NHMec, and Leu-Tyr-Leu-|-Tyr-Trp, in which cleavage of the -Tyr-|-Leu- and -Tyr-|-Trp bonds also occurs).. In terms of biological role, cleaves peptides in various proteins in a process that requires ATP hydrolysis. Has a chymotrypsin-like activity. Plays a major role in the degradation of misfolded proteins. This Rhodopseudomonas palustris (strain ATCC BAA-98 / CGA009) protein is ATP-dependent Clp protease proteolytic subunit.